The following is a 3013-amino-acid chain: DmX-like protein 1 (3013 aa).

WD repeat units lie at residues 108-145, 164-204, and 227-275; these read FLDSIAHNITWDPAGNRLLTGSSCLQLWCNSRKQTEDE, KTAS…RPAV, and AHPR…NDCF. Phosphoserine is present on residues serine 322, serine 420, serine 423, and serine 434. The disordered stretch occupies residues 418 to 442; that stretch reads PSSEASVEDSIQADLKSDEELDDGV. Residues 474–514 form a WD 4 repeat; it reads DHQIEVLLSEWSKNADMLFSIHPMDGSLLVWHVDWLDEYQP. The residue at position 572 (serine 572) is a Phosphoserine. 2 WD repeats span residues 578–619 and 842–893; these read AHSK…ESAF and KKRL…TPVS. Residues serine 916 and serine 922 each carry the phosphoserine modification. 3 WD repeats span residues 970–1008, 1145–1193, and 1208–1248; these read HLSSSSIYPVCSAPYLLATSCSDDKVRFWRCRVTNGESA, EDGS…PLSK, and GAPP…EPVI. Phosphoserine is present on residues serine 1829, serine 1896, serine 1903, and serine 1965. 2 disordered regions span residues 2364–2406 and 2431–2462; these read GQAN…PPAV and QSRAEYDSEESLESDDEEEEDDDDALPSGLQL. Positions 2385-2398 are enriched in low complexity; it reads SKVSARESPVSSSS. Over residues 2437 to 2455 the composition is skewed to acidic residues; sequence DSEESLESDDEEEEDDDDA. WD repeat units follow at residues 2728-2769, 2771-2810, 2822-2864, 2870-2909, 2912-2951, and 2964-3002; these read KAIN…TCFR, GGNSRITRMRFNYQGNKFGIVDADGYLSLYQTNWKCCPVT, CHNK…ANSL, CHDSGATVLAYAPKHQLLISGGRKGFTCIFDLRQRQQRQL, SHDSPVKAIAIDPTEEYFVTGSAEGNIKIWSLSSFSLLHT, and NIGTGVMQIETGPANHIFSCGADGTMKMRILPDQFSPLN.

This chain is DmX-like protein 1 (Dmxl1), found in Mus musculus (Mouse).